The sequence spans 191 residues: Photosystem I assembly protein Ycf4 (191 aa).

2 helical membrane passes run 33-53 (LLAV…LSSY) and 74-94 (LVMG…WAMI).

Belongs to the Ycf4 family.

It is found in the cellular thylakoid membrane. In terms of biological role, seems to be required for the assembly of the photosystem I complex. In Prochlorococcus marinus (strain MIT 9303), this protein is Photosystem I assembly protein Ycf4.